The following is a 381-amino-acid chain: Spermidine/putrescine import ATP-binding protein PotA (381 aa).

Positions 19–249 (VELRKVFKVF…PESPFVADFI (231 aa)) constitute an ABC transporter domain. ATP is bound at residue 51–58 (GPSGCGKT).

It belongs to the ABC transporter superfamily. Spermidine/putrescine importer (TC 3.A.1.11.1) family. In terms of assembly, the complex is composed of two ATP-binding proteins (PotA), two transmembrane proteins (PotB and PotC) and a solute-binding protein (PotD).

It localises to the cell inner membrane. It catalyses the reaction ATP + H2O + polyamine-[polyamine-binding protein]Side 1 = ADP + phosphate + polyamineSide 2 + [polyamine-binding protein]Side 1.. In terms of biological role, part of the ABC transporter complex PotABCD involved in spermidine/putrescine import. Responsible for energy coupling to the transport system. In Trichodesmium erythraeum (strain IMS101), this protein is Spermidine/putrescine import ATP-binding protein PotA.